The primary structure comprises 208 residues: MTKVLFVKANNRPAEQAVSVKLYEAFLASYKEAHPNDTVVELDLYKEELPYVGVDMINGTFKAGKGFDLTEEEAKAVAVADKYLNQFLEADKVVFGFPLWNLTIPAVLHTYIDYLNRAGKTFKYTPEGPVGLIGDKKIALLNARGGVYSEGPAAGAEMAVKYVATMMGFFGATNMETIVIEGHNQFPDKAEEIITAGLEEAAKVANKF.

The protein belongs to the azoreductase type 1 family. In terms of assembly, homodimer. FMN is required as a cofactor.

The catalysed reaction is 2 a quinone + NADH + H(+) = 2 a 1,4-benzosemiquinone + NAD(+). The enzyme catalyses N,N-dimethyl-1,4-phenylenediamine + anthranilate + 2 NAD(+) = 2-(4-dimethylaminophenyl)diazenylbenzoate + 2 NADH + 2 H(+). In terms of biological role, quinone reductase that provides resistance to thiol-specific stress caused by electrophilic quinones. Functionally, also exhibits azoreductase activity. Catalyzes the reductive cleavage of the azo bond in aromatic azo compounds to the corresponding amines. This chain is FMN-dependent NADH:quinone oxidoreductase 4, found in Bacillus cereus (strain ZK / E33L).